The sequence spans 76 residues: Large ribosomal subunit protein eL38 (76 aa).

It belongs to the eukaryotic ribosomal protein eL38 family.

In Lysiphlebus testaceipes (Greenbugs aphid parastoid), this protein is Large ribosomal subunit protein eL38 (RpL38).